We begin with the raw amino-acid sequence, 129 residues long: UPF0325 protein Spro_3794 (129 aa).

The protein belongs to the UPF0325 family.

The polypeptide is UPF0325 protein Spro_3794 (Serratia proteamaculans (strain 568)).